The primary structure comprises 159 residues: Transmembrane protein 92 (159 aa).

An N-terminal signal peptide occupies residues 1 to 26 (MSQAWVPGLAPTLLFSLLAGPQKIAA). The Extracellular segment spans residues 27 to 57 (KCGLILACPKGFKCCGDSCCQENELFPGPVR). A helical transmembrane segment spans residues 58–78 (IFVIIFLVILSVFCICGLAKC). The Cytoplasmic portion of the chain corresponds to 79–159 (FCRNCREPEP…DQRGIDNPAF (81 aa)). Residues 122 to 159 (EVILKPSLGPTPTEPPPPYSFRPEEYTGDQRGIDNPAF) are disordered.

Its subcellular location is the membrane. This is Transmembrane protein 92 (TMEM92) from Homo sapiens (Human).